We begin with the raw amino-acid sequence, 588 residues long: Protein disulfide-isomerase-like protein of the testis (588 aa).

Residues 1–20 (MELLWTPLLLVAACLSEVLG) form the signal peptide. Asn-55, Asn-157, and Asn-337 each carry an N-linked (GlcNAc...) asparagine glycan. The region spanning 385 to 448 (PVKKLVGKNF…IAKIDITAND (64 aa)) is the Thioredoxin domain. Basic and acidic residues-rich tracts occupy residues 531–542 (IEDTSKQDRPVK), 549–567 (SIRKPEEPERRKETAEREA), and 574–588 (EQPKPERKLEVKEEL). The segment at 531–588 (IEDTSKQDRPVKESPVLDSIRKPEEPERRKETAEREAAAAQPKEQPKPERKLEVKEEL) is disordered. A Prevents secretion from ER motif is present at residues 585–588 (KEEL).

The protein belongs to the protein disulfide isomerase family. Homodimer. The homodimer is not disulfide-linked. Interacts with CLGN and ERO1A. N-glycosylated. As to expression, testis-specific (at protein level).

The protein localises to the endoplasmic reticulum. Its function is as follows. Probable redox-inactive chaperone involved in spermatogenesis. This Mus musculus (Mouse) protein is Protein disulfide-isomerase-like protein of the testis (Pdilt).